The following is a 570-amino-acid chain: Sulfite reductase [NADPH] hemoprotein beta-component (570 aa).

Cys434, Cys440, Cys479, and Cys483 together coordinate [4Fe-4S] cluster. Position 483 (Cys483) interacts with siroheme.

This sequence belongs to the nitrite and sulfite reductase 4Fe-4S domain family. In terms of assembly, alpha(8)-beta(8). The alpha component is a flavoprotein, the beta component is a hemoprotein. Siroheme is required as a cofactor. It depends on [4Fe-4S] cluster as a cofactor.

The enzyme catalyses hydrogen sulfide + 3 NADP(+) + 3 H2O = sulfite + 3 NADPH + 4 H(+). It participates in sulfur metabolism; hydrogen sulfide biosynthesis; hydrogen sulfide from sulfite (NADPH route): step 1/1. Functionally, component of the sulfite reductase complex that catalyzes the 6-electron reduction of sulfite to sulfide. This is one of several activities required for the biosynthesis of L-cysteine from sulfate. This Salmonella dublin (strain CT_02021853) protein is Sulfite reductase [NADPH] hemoprotein beta-component.